A 116-amino-acid polypeptide reads, in one-letter code: Non-specific lipid-transfer protein (116 aa).

The first 25 residues, 1–25 (MASMVMNVLCVAVACMVFSASYADA), serve as a signal peptide directing secretion. 4 cysteine pairs are disulfide-bonded: C28–C75, C38–C52, C53–C98, and C73–C112.

Belongs to the plant LTP family.

Its function is as follows. Plant non-specific lipid-transfer proteins transfer phospholipids as well as galactolipids across membranes. May play a role in wax or cutin deposition in the cell walls of expanding epidermal cells and certain secretory tissues. This Gerbera hybrida (Daisy) protein is Non-specific lipid-transfer protein.